Here is a 354-residue protein sequence, read N- to C-terminus: Protein RecA (354 aa).

65-72 contributes to the ATP binding site; it reads GPESSGKT.

The protein belongs to the RecA family.

It localises to the cytoplasm. Functionally, can catalyze the hydrolysis of ATP in the presence of single-stranded DNA, the ATP-dependent uptake of single-stranded DNA by duplex DNA, and the ATP-dependent hybridization of homologous single-stranded DNAs. It interacts with LexA causing its activation and leading to its autocatalytic cleavage. The polypeptide is Protein RecA (Aeromonas hydrophila subsp. hydrophila (strain ATCC 7966 / DSM 30187 / BCRC 13018 / CCUG 14551 / JCM 1027 / KCTC 2358 / NCIMB 9240 / NCTC 8049)).